The sequence spans 478 residues: WD repeat-containing protein AAC3 (478 aa).

Disordered regions lie at residues 33-53 (HPLF…QQQQ) and 106-140 (SQIH…QYTN). A compositionally biased stretch (low complexity) spans 106-125 (SQIHQQSQQSQLSNNLNSNS). The segment covering 126 to 140 (KESTNIPKTNTQYTN) has biased composition (polar residues). 7 WD repeats span residues 163–202 (GNKK…NSNN), 226–268 (GHDG…GTVS), 270–307 (NSEN…TLKI), 310–349 (FNGE…TTHV), 357–396 (GHTA…CVKT), 399–438 (KSTF…PIHT), and 440–478 (ECSG…GYHS).

Belongs to the THOC3 family.

In Dictyostelium discoideum (Social amoeba), this protein is WD repeat-containing protein AAC3 (AAC3).